Consider the following 104-residue polypeptide: Co-chaperonin GroES 3 (104 aa).

It belongs to the GroES chaperonin family. In terms of assembly, heptamer of 7 subunits arranged in a ring. Interacts with the chaperonin GroEL.

The protein localises to the cytoplasm. Together with the chaperonin GroEL, plays an essential role in assisting protein folding. The GroEL-GroES system forms a nano-cage that allows encapsulation of the non-native substrate proteins and provides a physical environment optimized to promote and accelerate protein folding. GroES binds to the apical surface of the GroEL ring, thereby capping the opening of the GroEL channel. This Bradyrhizobium diazoefficiens (strain JCM 10833 / BCRC 13528 / IAM 13628 / NBRC 14792 / USDA 110) protein is Co-chaperonin GroES 3.